We begin with the raw amino-acid sequence, 316 residues long: UDP-N-acetyl-2-amino-2-deoxy-D-glucuronate oxidase (316 aa).

NAD(+) is bound by residues 11 to 13 (GYI), 32 to 37 (YDINDS), E55, 81 to 84 (NYLH), 101 to 102 (EK), Q130, and 171 to 172 (WK).

Belongs to the Gfo/Idh/MocA family. In terms of assembly, homotetramer.

The enzyme catalyses UDP-2-acetamido-2-deoxy-alpha-D-glucuronate + NAD(+) = UDP-2-acetamido-2-deoxy-alpha-D-ribo-hex-3-uluronate + NADH + H(+). It catalyses the reaction 2-hydroxyglutarate + NAD(+) = 2-oxoglutarate + NADH + H(+). It functions in the pathway bacterial outer membrane biogenesis; LPS O-antigen biosynthesis. In terms of biological role, plays a role in the biosynthesis of B-band O antigen for serotype O5. Catalyzes the NAD-dependent oxidation of UDP-N-acetylglucosaminuronic acid (UDP-D-GlcNAcA) to UDP-2-acetamido-2-deoxy-3-oxo-D-glucuronic acid (UDP-3-oxo-D-GlcNAcA). Cannot use UDP-GlcNAc or UDP-GalNAc as the nucleotide sugar substrate, and can use only poorly UDP-D-glucuronic acid (UDP-GlcA). Undergoes an NAD(+) recycling mechanism using 2-oxoglutarate as an oxidant. This is UDP-N-acetyl-2-amino-2-deoxy-D-glucuronate oxidase from Pseudomonas aeruginosa (strain ATCC 15692 / DSM 22644 / CIP 104116 / JCM 14847 / LMG 12228 / 1C / PRS 101 / PAO1).